The sequence spans 397 residues: Argininosuccinate synthase (397 aa).

Position 8 to 16 (8 to 16 (AYSGGLDTS)) interacts with ATP. The L-citrulline site is built by tyrosine 86 and serine 91. Glycine 116 provides a ligand contact to ATP. Residues threonine 118, asparagine 122, and aspartate 123 each contribute to the L-aspartate site. Asparagine 122 provides a ligand contact to L-citrulline. L-citrulline is bound by residues arginine 126, serine 175, serine 184, glutamate 260, and tyrosine 272.

This sequence belongs to the argininosuccinate synthase family. Type 1 subfamily. In terms of assembly, homotetramer.

The protein localises to the cytoplasm. The enzyme catalyses L-citrulline + L-aspartate + ATP = 2-(N(omega)-L-arginino)succinate + AMP + diphosphate + H(+). The protein operates within amino-acid biosynthesis; L-arginine biosynthesis; L-arginine from L-ornithine and carbamoyl phosphate: step 2/3. The protein is Argininosuccinate synthase of Clostridium botulinum (strain Langeland / NCTC 10281 / Type F).